Reading from the N-terminus, the 125-residue chain is Small ribosomal subunit protein uS11 (125 aa).

The protein belongs to the universal ribosomal protein uS11 family. Part of the 30S ribosomal subunit. Interacts with proteins S7 and S18. Binds to IF-3.

Functionally, located on the platform of the 30S subunit, it bridges several disparate RNA helices of the 16S rRNA. Forms part of the Shine-Dalgarno cleft in the 70S ribosome. In Aquifex aeolicus (strain VF5), this protein is Small ribosomal subunit protein uS11.